Here is a 213-residue protein sequence, read N- to C-terminus: 3-demethoxyubiquinol 3-hydroxylase (213 aa).

Fe cation-binding residues include Glu62, Glu92, His95, Glu144, Glu176, and His179.

It belongs to the COQ7 family. Requires Fe cation as cofactor.

It is found in the cell membrane. It carries out the reaction a 5-methoxy-2-methyl-3-(all-trans-polyprenyl)benzene-1,4-diol + AH2 + O2 = a 3-demethylubiquinol + A + H2O. It participates in cofactor biosynthesis; ubiquinone biosynthesis. In terms of biological role, catalyzes the hydroxylation of 2-nonaprenyl-3-methyl-6-methoxy-1,4-benzoquinol during ubiquinone biosynthesis. The protein is 3-demethoxyubiquinol 3-hydroxylase of Psychrobacter sp. (strain PRwf-1).